We begin with the raw amino-acid sequence, 144 residues long: Large ribosomal subunit protein uL14 (144 aa).

Belongs to the universal ribosomal protein uL14 family. As to quaternary structure, part of the 50S ribosomal subunit. Forms a cluster with proteins L3 and L24e, part of which may contact the 16S rRNA in 2 intersubunit bridges.

Functionally, binds to 23S rRNA. Forms part of two intersubunit bridges in the 70S ribosome. The sequence is that of Large ribosomal subunit protein uL14 from Pyrobaculum islandicum (strain DSM 4184 / JCM 9189 / GEO3).